A 36-amino-acid chain; its full sequence is MSDIN-like toxin proprotein 10 (36 aa).

A propeptide spanning residues 1-10 (MSDINATRLP) is cleaved from the precursor. Positions 11-19 (GAYPPVPMP) form a cross-link, cyclopeptide (Gly-Pro). The propeptide occupies 20 to 36 (CVGDADNFTLTRGENLC).

Belongs to the MSDIN fungal toxin family. Post-translationally, processed by the macrocyclase-peptidase enzyme POPB to yield a toxic cyclic nonapeptide. POPB first removes 10 residues from the N-terminus. Conformational trapping of the remaining peptide forces the enzyme to release this intermediate rather than proceed to macrocyclization. The enzyme rebinds the remaining peptide in a different conformation and catalyzes macrocyclization of the N-terminal 9 residues.

In terms of biological role, probable toxin that belongs to the MSDIN-like toxin family responsible for a large number of food poisoning cases and deaths. The polypeptide is MSDIN-like toxin proprotein 10 (Amanita bisporigera (Destroying angel)).